Reading from the N-terminus, the 557-residue chain is Probable asparagine synthetase [glutamine-hydrolyzing] (557 aa).

Cys-2 functions as the For GATase activity in the catalytic mechanism. The Glutamine amidotransferase type-2 domain occupies 2-188 (CGILAILNSL…PGHYFSSKTK (187 aa)). Residues 50–54 (RLAIV), 75–77 (NGE), and Asp-101 contribute to the L-glutamine site. One can recognise an Asparagine synthetase domain in the interval 217 to 466 (AIKEAFEQAV…LPSSVLWRQK (250 aa)). ATP is bound by residues Leu-239, Ile-279, and 353-354 (SG). The disordered stretch occupies residues 538 to 557 (WGASQDPSGRAQKVHLSTTE).

It catalyses the reaction L-aspartate + L-glutamine + ATP + H2O = L-asparagine + L-glutamate + AMP + diphosphate + H(+). It functions in the pathway amino-acid biosynthesis; L-asparagine biosynthesis; L-asparagine from L-aspartate (L-Gln route): step 1/1. The chain is Probable asparagine synthetase [glutamine-hydrolyzing] (asns) from Dictyostelium discoideum (Social amoeba).